The chain runs to 132 residues: Ribonuclease P protein component (132 aa).

Belongs to the RnpA family. As to quaternary structure, consists of a catalytic RNA component (M1 or rnpB) and a protein subunit.

The enzyme catalyses Endonucleolytic cleavage of RNA, removing 5'-extranucleotides from tRNA precursor.. Its function is as follows. RNaseP catalyzes the removal of the 5'-leader sequence from pre-tRNA to produce the mature 5'-terminus. It can also cleave other RNA substrates such as 4.5S RNA. The protein component plays an auxiliary but essential role in vivo by binding to the 5'-leader sequence and broadening the substrate specificity of the ribozyme. This is Ribonuclease P protein component from Marinomonas sp. (strain MWYL1).